The chain runs to 660 residues: tRNA 5-methylaminomethyl-2-thiouridine biosynthesis bifunctional protein MnmC (660 aa).

Residues 1 to 235 (MTITRHARID…KWEVLRGTFI (235 aa)) form a tRNA (mnm(5)s(2)U34)-methyltransferase region. The tract at residues 266–660 (IGAGLAGCAT…LRGLIRGGGK (395 aa)) is FAD-dependent cmnm(5)s(2)U34 oxidoreductase.

The protein in the N-terminal section; belongs to the methyltransferase superfamily. tRNA (mnm(5)s(2)U34)-methyltransferase family. This sequence in the C-terminal section; belongs to the DAO family. Requires FAD as cofactor.

It is found in the cytoplasm. It carries out the reaction 5-aminomethyl-2-thiouridine(34) in tRNA + S-adenosyl-L-methionine = 5-methylaminomethyl-2-thiouridine(34) in tRNA + S-adenosyl-L-homocysteine + H(+). In terms of biological role, catalyzes the last two steps in the biosynthesis of 5-methylaminomethyl-2-thiouridine (mnm(5)s(2)U) at the wobble position (U34) in tRNA. Catalyzes the FAD-dependent demodification of cmnm(5)s(2)U34 to nm(5)s(2)U34, followed by the transfer of a methyl group from S-adenosyl-L-methionine to nm(5)s(2)U34, to form mnm(5)s(2)U34. The chain is tRNA 5-methylaminomethyl-2-thiouridine biosynthesis bifunctional protein MnmC from Pseudomonas savastanoi pv. phaseolicola (strain 1448A / Race 6) (Pseudomonas syringae pv. phaseolicola (strain 1448A / Race 6)).